The sequence spans 123 residues: uncharacterized protein (123 aa).

This is an uncharacterized protein from Escherichia coli O157:H7.